The following is a 327-amino-acid chain: MTTIKQVALEAGVSKSTVSRFIAQNGYVSDEAREKIERAIKKLNFRPNLSAQSLKTKKNQLVGLLLPDISNPFFPMLAKGAEEFLKEKGYRVMLGNIGEKNQSEQDYLKVLIQSNAAGIISTHDFKEDFPDLDIPTVIVDRVGHKSNYGVFSDNESGGRLAAKVIVTAGAKKVAVVSGPLNATNINNRFKSSIAYLKEKQVDFKAFYSQSYDFEEIQKEAREVLANEENFDSIIAPSDIHAMAYIHEIHRLNKKIPEDIQIIGYDDIQMSQFIYPALSTIHQSAYQMGLEAAQLIYKIATDQAIEKSKIELPVHYVARETIRQKRKE.

Positions 1-56 constitute an HTH lacI-type domain; it reads MTTIKQVALEAGVSKSTVSRFIAQNGYVSDEAREKIERAIKKLNFRPNLSAQSLKT. A DNA-binding region (H-T-H motif) is located at residues 4–23; sequence IKQVALEAGVSKSTVSRFIA.

In terms of biological role, transcriptional repressor for the ribose rbsDACBK operon. This chain is Ribose operon repressor (rbsR), found in Lactococcus lactis subsp. lactis (strain IL1403) (Streptococcus lactis).